Reading from the N-terminus, the 956-residue chain is Glutamyl aminopeptidase (956 aa).

At 1 to 21 (MILEERSSWEGSKRYCIKTKH) the chain is on the cytoplasmic side. The chain crosses the membrane as a helical; Signal-anchor for type II membrane protein span at residues 22–42 (VAIICAVVVAVGLIVGLSVGL). Over 43-956 (TRSCDSTEGM…IRNWFLDLNG (914 aa)) the chain is Extracellular. The interval 48–87 (STEGMTQGTTQGTTQAPSHLPPVTSPPEDQGVCPASEDES) is disordered. The span at 49 to 62 (TEGMTQGTTQGTTQ) shows a compositional bias: low complexity. 2 N-linked (GlcNAc...) asparagine glycosylation sites follow: asparagine 126 and asparagine 199. Position 225 (glutamate 225) interacts with substrate. Asparagine 326 carries N-linked (GlcNAc...) asparagine glycosylation. Substrate is bound at residue 359–363 (GAMEN). Histidine 395 serves as a coordination point for Zn(2+). Residue glutamate 396 is the Proton acceptor of the active site. Zn(2+)-binding residues include histidine 399 and glutamate 418. Residues asparagine 556, asparagine 569, asparagine 599, asparagine 643, asparagine 647, asparagine 679, asparagine 764, asparagine 797, asparagine 802, and asparagine 829 are each glycosylated (N-linked (GlcNAc...) asparagine). Arginine 888 is a binding site for substrate.

Belongs to the peptidase M1 family. As to quaternary structure, homodimer; disulfide-linked. It depends on Zn(2+) as a cofactor.

It is found in the cell membrane. The catalysed reaction is Release of N-terminal glutamate (and to a lesser extent aspartate) from a peptide.. Substrate specificity is modulated by calcium which enhances the enzymatic activity for cleavage of acidic residues while reducing its activity with basic residues. Inhibited by aminopeptidase inhibitors amastatin and bestatin. Functionally, regulates central hypertension through its calcium-modulated preference to cleave N-terminal acidic residues from peptides such as angiotensin II. The chain is Glutamyl aminopeptidase (ENPEP) from Bos taurus (Bovine).